A 695-amino-acid polypeptide reads, in one-letter code: UvrABC system protein C (695 aa).

Positions 1–10 are enriched in basic and acidic residues; sequence MNHDPAETRD. The disordered stretch occupies residues 1–44; that stretch reads MNHDPAETRDTAAAPLADTESPSPVSPELTPHPAPAAQDIDTAT. The 79-residue stretch at 88–166 folds into the GIY-YIG domain; it reads TSPGVYRMLN…IKQLRPRFNV (79 aa). Residues 276 to 311 enclose the UVR domain; it reads RAVKQELAVEMEKASNELEFETAALYRDRLAALSAI.

The protein belongs to the UvrC family. In terms of assembly, interacts with UvrB in an incision complex.

The protein localises to the cytoplasm. Functionally, the UvrABC repair system catalyzes the recognition and processing of DNA lesions. UvrC both incises the 5' and 3' sides of the lesion. The N-terminal half is responsible for the 3' incision and the C-terminal half is responsible for the 5' incision. This Rhodopseudomonas palustris (strain HaA2) protein is UvrABC system protein C.